The chain runs to 458 residues: ATP synthase subunit beta (458 aa).

148–155 serves as a coordination point for ATP; it reads GGAGVGKT.

This sequence belongs to the ATPase alpha/beta chains family. In terms of assembly, F-type ATPases have 2 components, CF(1) - the catalytic core - and CF(0) - the membrane proton channel. CF(1) has five subunits: alpha(3), beta(3), gamma(1), delta(1), epsilon(1). CF(0) has three main subunits: a(1), b(2) and c(9-12). The alpha and beta chains form an alternating ring which encloses part of the gamma chain. CF(1) is attached to CF(0) by a central stalk formed by the gamma and epsilon chains, while a peripheral stalk is formed by the delta and b chains.

The protein localises to the cell inner membrane. It carries out the reaction ATP + H2O + 4 H(+)(in) = ADP + phosphate + 5 H(+)(out). Its function is as follows. Produces ATP from ADP in the presence of a proton gradient across the membrane. The catalytic sites are hosted primarily by the beta subunits. The chain is ATP synthase subunit beta from Shewanella woodyi (strain ATCC 51908 / MS32).